The sequence spans 757 residues: RNA cytosine C(5)-methyltransferase NSUN2 (757 aa).

A disordered region spans residues 1–35 (MGRRARGRRFQQPPQPEGEEDASDGGRKRGQAGWE). Ser-23 bears the Phosphoserine mark. Lys-46 is covalently cross-linked (Glycyl lysine isopeptide (Lys-Gly) (interchain with G-Cter in SUMO2)). At Ser-139 the chain carries Phosphoserine; by AURKB. S-adenosyl-L-methionine-binding positions include 184 to 190 (CAAPGSK), Asp-215, Asp-242, and Asp-268. Cys-321 serves as the catalytic Nucleophile. A disordered region spans residues 436–504 (NKRQPKVQNK…EKKDGVCGPP (69 aa)). A phosphoserine mark is found at Ser-456 and Ser-473. Positions 463 to 476 (GNPSDQSELESQMI) are enriched in polar residues. Residues Lys-510 and Lys-515 each participate in a glycyl lysine isopeptide (Lys-Gly) (interchain with G-Cter in SUMO2) cross-link. Residue Lys-585 is modified to N6-acetyllysine; alternate. N6-malonyllysine; alternate is present on Lys-585. Residue Lys-585 forms a Glycyl lysine isopeptide (Lys-Gly) (interchain with G-Cter in SUMO2); alternate linkage. Ser-592 is modified (phosphoserine). Residues Lys-639, Lys-653, and Lys-659 each participate in a glycyl lysine isopeptide (Lys-Gly) (interchain with G-Cter in SUMO2) cross-link. Positions 716–757 (LTNENAASPEQPGDEDAKQTAQDPCVPDSVPGCDAAAAEPSR) are disordered. Phosphothreonine is present on Thr-717. Ser-723 carries the phosphoserine modification.

This sequence belongs to the class I-like SAM-binding methyltransferase superfamily. RsmB/NOP family. TRM4 subfamily. As to quaternary structure, interacts with NPM1 and NCL during interphase; interaction is disrupted following phosphorylation at Ser-139. In terms of processing, phosphorylated at Ser-139 by AURKB during mitosis, leading to abolish methyltransferase activity and the interaction with NPM1. Ubiquitously expressed at low level. Up-regulated in tumors. Dynamically expressed during morphogenesis and in adult skin: in adult skin, expression is up-regulated in the bulge and hair germ as soon as the hair follicle enters its growing phase (anagen). During anagen, expressed at highest level in cells of the hair germ that give rise to the hair matrix.

The protein localises to the nucleus. It is found in the nucleolus. It localises to the cytoplasm. Its subcellular location is the mitochondrion. The protein resides in the cytoskeleton. The protein localises to the spindle. It is found in the secreted. It localises to the extracellular exosome. The catalysed reaction is cytidine(48) in tRNA + S-adenosyl-L-methionine = 5-methylcytidine(48) in tRNA + S-adenosyl-L-homocysteine + H(+). The enzyme catalyses cytidine(49) in tRNA + S-adenosyl-L-methionine = 5-methylcytidine(49) in tRNA + S-adenosyl-L-homocysteine + H(+). It carries out the reaction cytidine(50) in tRNA + S-adenosyl-L-methionine = 5-methylcytidine(50) in tRNA + S-adenosyl-L-homocysteine + H(+). It catalyses the reaction cytidine(34) in tRNA precursor + S-adenosyl-L-methionine = 5-methylcytidine(34) in tRNA precursor + S-adenosyl-L-homocysteine + H(+). The catalysed reaction is a cytidine in mRNA + S-adenosyl-L-methionine = a 5-methylcytidine in mRNA + S-adenosyl-L-homocysteine + H(+). Inhibited by magnesium ions. Functionally, RNA cytosine C(5)-methyltransferase that methylates cytosine to 5-methylcytosine (m5C) in various RNAs, such as tRNAs, mRNAs and some long non-coding RNAs (lncRNAs). Involved in various processes, such as epidermal stem cell differentiation, testis differentiation and maternal to zygotic transition during early development: acts by increasing protein synthesis; cytosine C(5)-methylation promoting tRNA stability and preventing mRNA decay. Methylates cytosine to 5-methylcytosine (m5C) at positions 34 and 48 of intron-containing tRNA(Leu)(CAA) precursors, and at positions 48, 49 and 50 of tRNA(Gly)(GCC) precursors. tRNA methylation is required generation of RNA fragments derived from tRNAs (tRFs). Also mediates C(5)-methylation of mitochondrial tRNAs. Catalyzes cytosine C(5)-methylation of mRNAs, leading to stabilize them and prevent mRNA decay: mRNA stabilization involves YBX1 that specifically recognizes and binds m5C-modified transcripts. Cytosine C(5)-methylation of mRNAs also regulates mRNA export: methylated transcripts are specifically recognized by THOC4/ALYREF, which mediates mRNA nucleo-cytoplasmic shuttling. Also mediates cytosine C(5)-methylation of non-coding RNAs, such as vault RNAs (vtRNAs), promoting their processing into regulatory small RNAs. Cytosine C(5)-methylation of vtRNA VTRNA1.1 promotes its processing into small-vault RNA4 (svRNA4) and regulates epidermal differentiation. May act downstream of Myc to regulate epidermal cell growth and proliferation. Required for proper spindle assembly and chromosome segregation, independently of its methyltransferase activity. The chain is RNA cytosine C(5)-methyltransferase NSUN2 from Mus musculus (Mouse).